We begin with the raw amino-acid sequence, 734 residues long: 5-methyltetrahydropteroyltriglutamate--homocysteine methyltransferase (734 aa).

Residues 15 to 18 and lysine 104 each bind 5-methyltetrahydropteroyltri-L-glutamate; that span reads REFK. Residues 409 to 411 and glutamate 462 contribute to the L-homocysteine site; that span reads IGS. L-methionine contacts are provided by residues 409-411 and glutamate 462; that span reads IGS. Residues 493-494 and tryptophan 539 each bind 5-methyltetrahydropteroyltri-L-glutamate; that span reads RC. Aspartate 577 is a binding site for L-homocysteine. Aspartate 577 serves as a coordination point for L-methionine. Glutamate 583 provides a ligand contact to 5-methyltetrahydropteroyltri-L-glutamate. Residues histidine 618, cysteine 620, and glutamate 642 each contribute to the Zn(2+) site. The active-site Proton donor is the histidine 672. Cysteine 704 lines the Zn(2+) pocket.

Belongs to the vitamin-B12 independent methionine synthase family. Zn(2+) is required as a cofactor.

The enzyme catalyses 5-methyltetrahydropteroyltri-L-glutamate + L-homocysteine = tetrahydropteroyltri-L-glutamate + L-methionine. The protein operates within amino-acid biosynthesis; L-methionine biosynthesis via de novo pathway; L-methionine from L-homocysteine (MetE route): step 1/1. Functionally, catalyzes the transfer of a methyl group from 5-methyltetrahydrofolate to homocysteine resulting in methionine formation. This is 5-methyltetrahydropteroyltriglutamate--homocysteine methyltransferase from Thermotoga maritima (strain ATCC 43589 / DSM 3109 / JCM 10099 / NBRC 100826 / MSB8).